A 303-amino-acid polypeptide reads, in one-letter code: MADAASQVLLGSGLTILSQPLMYVKVLIQVGYEPLPPTIGRNIFGRQVCQLPGLFCYAQHIASIDGRRGLFTGLTPRLCSGVLGTVVHGKVLQYYQESEKPEELGSVTVQKEYSSSFDRVIKETTREMIARSAATLITHPFHVITLRSMVQFIGRESKYCGLCDSIVTIYREEGIVGFFAGLIPRLLGDIISLWLCNSLAYLINTYALDSGVSTMNEMKSYSQAVTGFFASMLTYPFVLVSNLMAVNNCGLAGGSPPYSPIYTSWIDCWCMLQKAGNMSRGNSLFFRKVPCGKTYCYDLRMLI.

N-acetylalanine is present on Ala-2. Residues 2–15 (ADAASQVLLGSGLT) are Mitochondrial intermembrane-facing. 2 Solcar repeats span residues 2–98 (ADAA…YQES) and 118–206 (DRVI…INTY). Residues 16-36 (ILSQPLMYVKVLIQVGYEPLP) traverse the membrane as a helical segment. Residues 37–77 (PTIGRNIFGRQVCQLPGLFCYAQHIASIDGRRGLFTGLTPR) are Cytoplasmic-facing. The helical transmembrane segment at 78–92 (LCSGVLGTVVHGKVL) threads the bilayer. Topologically, residues 93–135 (QYYQESEKPEELGSVTVQKEYSSSFDRVIKETTREMIARSAAT) are mitochondrial intermembrane. The chain crosses the membrane as a helical span at residues 136–156 (LITHPFHVITLRSMVQFIGRE). Over 157-180 (SKYCGLCDSIVTIYREEGIVGFFA) the chain is Cytoplasmic. The chain crosses the membrane as a helical span at residues 181–199 (GLIPRLLGDIISLWLCNSL). The Mitochondrial intermembrane segment spans residues 200 to 231 (AYLINTYALDSGVSTMNEMKSYSQAVTGFFAS). A helical transmembrane segment spans residues 232-252 (MLTYPFVLVSNLMAVNNCGLA). The Cytoplasmic segment spans residues 253-280 (GGSPPYSPIYTSWIDCWCMLQKAGNMSR). A helical transmembrane segment spans residues 281-303 (GNSLFFRKVPCGKTYCYDLRMLI).

It belongs to the mitochondrial carrier (TC 2.A.29) family. As to quaternary structure, interacts with p15BID. Expressed in a wide variety of tissues. Predominant expressed in liver, kidney, heart, skeletal muscle and testis.

Its subcellular location is the mitochondrion outer membrane. Protein insertase that mediates insertion of transmembrane proteins into the mitochondrial outer membrane. Catalyzes insertion of proteins with alpha-helical transmembrane regions, such as signal-anchored, tail-anchored and multi-pass membrane proteins. Does not mediate insertion of beta-barrel transmembrane proteins. Also acts as a receptor for the truncated form of pro-apoptotic BH3-interacting domain death agonist (p15 BID) and has therefore a critical function in apoptosis. Regulates the quiescence/cycling of hematopoietic stem cells (HSCs). Acts as a regulator of mitochondrial fusion, essential for the naive-to-primed interconversion of embryonic stem cells (ESCs). Acts as a regulator of lipid homeostasis and has a regulatory role in adipocyte differentiation and biology. In Mus musculus (Mouse), this protein is Mitochondrial carrier homolog 2.